We begin with the raw amino-acid sequence, 370 residues long: Gibberellin 3-beta-dioxygenase 2-1 (370 aa).

The region spanning 205–306 (MTATMHLNWY…RISLGYFLGP (102 aa)) is the Fe2OG dioxygenase domain. H229, D231, and H287 together coordinate Fe cation. Residue R297 is part of the active site.

It belongs to the iron/ascorbate-dependent oxidoreductase family. GA3OX subfamily. L-ascorbate is required as a cofactor. It depends on Fe cation as a cofactor. In terms of tissue distribution, expressed in internodes, nodes and the ear of the elongating stem.

The catalysed reaction is gibberellin A20 + 2-oxoglutarate + O2 = gibberellin A1 + succinate + CO2. Converts the inactive gibberellin precursors GA9 and GA20 in the bioactives gibberellins GA4 and GA1. Also accepts GA15, GA44, the 2,3-unsaturated GA5 and 2,3-dihydroGA9 as substrate. No activity with GA12, GA53, GA24, GA19 and GA25. Also possesses 2-beta-hydroxylase, 2,3-desaturase, 2,3-epoxidase and 13-hydroxylase activities. This is Gibberellin 3-beta-dioxygenase 2-1 (GA3ox2-1) from Triticum aestivum (Wheat).